A 383-amino-acid polypeptide reads, in one-letter code: 23S rRNA (uracil(747)-C(5))-methyltransferase RlmC (383 aa).

The [4Fe-4S] cluster site is built by Cys3, Cys11, Cys14, and Cys89. Residues Gln214, Phe243, Glu270, and Asn315 each coordinate S-adenosyl-L-methionine. Cys342 serves as the catalytic Nucleophile.

This sequence belongs to the class I-like SAM-binding methyltransferase superfamily. RNA M5U methyltransferase family. RlmC subfamily.

The enzyme catalyses uridine(747) in 23S rRNA + S-adenosyl-L-methionine = 5-methyluridine(747) in 23S rRNA + S-adenosyl-L-homocysteine + H(+). Functionally, catalyzes the formation of 5-methyl-uridine at position 747 (m5U747) in 23S rRNA. This is 23S rRNA (uracil(747)-C(5))-methyltransferase RlmC from Actinobacillus succinogenes (strain ATCC 55618 / DSM 22257 / CCUG 43843 / 130Z).